The following is a 118-amino-acid chain: Large ribosomal subunit protein bL20 (118 aa).

It belongs to the bacterial ribosomal protein bL20 family.

Functionally, binds directly to 23S ribosomal RNA and is necessary for the in vitro assembly process of the 50S ribosomal subunit. It is not involved in the protein synthesizing functions of that subunit. The protein is Large ribosomal subunit protein bL20 of Stutzerimonas stutzeri (strain A1501) (Pseudomonas stutzeri).